The sequence spans 151 residues: Superoxide dismutase [Cu-Zn] 4 (151 aa).

The Cu cation site is built by His-45, His-47, and His-62. Residues Cys-56 and Cys-145 are joined by a disulfide bond. Zn(2+) contacts are provided by His-62, His-70, His-79, and Asp-82. His-120 contributes to the Cu cation binding site.

Belongs to the Cu-Zn superoxide dismutase family. As to quaternary structure, homodimer. Requires Cu cation as cofactor. It depends on Zn(2+) as a cofactor.

It localises to the cytoplasm. It carries out the reaction 2 superoxide + 2 H(+) = H2O2 + O2. Functionally, destroys radicals which are normally produced within the cells and which are toxic to biological systems. Protects spores from cellular damage caused by UV LIGHT. In Dictyostelium discoideum (Social amoeba), this protein is Superoxide dismutase [Cu-Zn] 4 (sodD).